We begin with the raw amino-acid sequence, 111 residues long: Ribonuclease P protein component (111 aa).

Belongs to the RnpA family. In terms of assembly, consists of a catalytic RNA component (M1 or rnpB) and a protein subunit.

It carries out the reaction Endonucleolytic cleavage of RNA, removing 5'-extranucleotides from tRNA precursor.. In terms of biological role, RNaseP catalyzes the removal of the 5'-leader sequence from pre-tRNA to produce the mature 5'-terminus. It can also cleave other RNA substrates such as 4.5S RNA. The protein component plays an auxiliary but essential role in vivo by binding to the 5'-leader sequence and broadening the substrate specificity of the ribozyme. The protein is Ribonuclease P protein component of Streptococcus thermophilus (strain ATCC BAA-491 / LMD-9).